A 92-amino-acid polypeptide reads, in one-letter code: Small ribosomal subunit protein uS19 (92 aa).

This sequence belongs to the universal ribosomal protein uS19 family.

Functionally, protein S19 forms a complex with S13 that binds strongly to the 16S ribosomal RNA. This is Small ribosomal subunit protein uS19 from Methylobacterium sp. (strain 4-46).